The following is a 255-amino-acid chain: Expansin-A25 (255 aa).

An N-terminal signal peptide occupies residues methionine 1–glycine 26. The region spanning glycine 45–glycine 160 is the Expansin-like EG45 domain. In terms of domain architecture, Expansin-like CBD spans phenylalanine 170–serine 249.

This sequence belongs to the expansin family. Expansin A subfamily. In terms of tissue distribution, expressed in panicles and flowers.

The protein resides in the secreted. Its subcellular location is the cell wall. The protein localises to the membrane. Functionally, may cause loosening and extension of plant cell walls by disrupting non-covalent bonding between cellulose microfibrils and matrix glucans. No enzymatic activity has been found. May be required for rapid internodal elongation in deepwater rice during submergence. In Oryza sativa subsp. japonica (Rice), this protein is Expansin-A25 (EXPA25).